We begin with the raw amino-acid sequence, 415 residues long: Histidine--tRNA ligase (415 aa).

The protein belongs to the class-II aminoacyl-tRNA synthetase family. In terms of assembly, homodimer.

Its subcellular location is the cytoplasm. The catalysed reaction is tRNA(His) + L-histidine + ATP = L-histidyl-tRNA(His) + AMP + diphosphate + H(+). The chain is Histidine--tRNA ligase from Clostridium botulinum (strain Loch Maree / Type A3).